The sequence spans 383 residues: tRNA-specific 2-thiouridylase MnmA (383 aa).

ATP contacts are provided by residues Ala-6 to Ser-13 and Leu-32. Cys-101 serves as the catalytic Nucleophile. Residues Cys-101 and Cys-199 are joined by a disulfide bond. Gly-125 provides a ligand contact to ATP. Positions Lys-148–Gln-150 are interaction with tRNA. Cys-199 functions as the Cysteine persulfide intermediate in the catalytic mechanism.

This sequence belongs to the MnmA/TRMU family.

It is found in the cytoplasm. It carries out the reaction S-sulfanyl-L-cysteinyl-[protein] + uridine(34) in tRNA + AH2 + ATP = 2-thiouridine(34) in tRNA + L-cysteinyl-[protein] + A + AMP + diphosphate + H(+). Its function is as follows. Catalyzes the 2-thiolation of uridine at the wobble position (U34) of tRNA, leading to the formation of s(2)U34. This Kocuria rhizophila (strain ATCC 9341 / DSM 348 / NBRC 103217 / DC2201) protein is tRNA-specific 2-thiouridylase MnmA.